The following is a 499-amino-acid chain: Pyruvate kinase (499 aa).

A substrate-binding site is contributed by arginine 50. Asparagine 52, serine 54, aspartate 84, and threonine 85 together coordinate K(+). Position 52-55 (52-55 (NFSH)) interacts with ATP. An ATP-binding site is contributed by arginine 91. A Mg(2+)-binding site is contributed by glutamate 241. Positions 264, 265, and 297 each coordinate substrate. Aspartate 265 lines the Mg(2+) pocket.

It belongs to the pyruvate kinase family. As to quaternary structure, homotetramer. Mg(2+) is required as a cofactor. Requires K(+) as cofactor.

The enzyme catalyses pyruvate + ATP = phosphoenolpyruvate + ADP + H(+). It participates in carbohydrate degradation; glycolysis; pyruvate from D-glyceraldehyde 3-phosphate: step 5/5. Its activity is regulated as follows. Activated by fructose 2,6-bisphosphate, activated by the effector in a non cooperative manner. The protein is Pyruvate kinase (PYK) of Leishmania mexicana.